The following is a 120-amino-acid chain: Immunoglobulin kappa variable 2-29 (120 aa).

Positions 1-20 (MRLPAQLLGLLMLWIPGSSA) are cleaved as a signal peptide. Positions 21–43 (DIVMTQTPLSLSVTPGQPASISC) are framework-1. In terms of domain architecture, Ig-like spans 21-120 (DIVMTQTPLS…YYCMQGIHLP (100 aa)). The cysteines at positions 43 and 113 are disulfide-linked. The segment at 44–59 (KSSQSLLHSDGKTYLY) is complementarity-determining-1. The tract at residues 60 to 74 (WYLQKPGQSPQLLIY) is framework-2. The complementarity-determining-2 stretch occupies residues 75-81 (EVSSRFS). The tract at residues 82–113 (GVPDRFSGSGSGTDFTLKISRVEAEDVGVYYC) is framework-3. The tract at residues 114 to 120 (MQGIHLP) is complementarity-determining-3.

Immunoglobulins are composed of two identical heavy chains and two identical light chains; disulfide-linked.

It localises to the secreted. The protein localises to the cell membrane. Functionally, v region of the variable domain of immunoglobulin light chains that participates in the antigen recognition. Immunoglobulins, also known as antibodies, are membrane-bound or secreted glycoproteins produced by B lymphocytes. In the recognition phase of humoral immunity, the membrane-bound immunoglobulins serve as receptors which, upon binding of a specific antigen, trigger the clonal expansion and differentiation of B lymphocytes into immunoglobulins-secreting plasma cells. Secreted immunoglobulins mediate the effector phase of humoral immunity, which results in the elimination of bound antigens. The antigen binding site is formed by the variable domain of one heavy chain, together with that of its associated light chain. Thus, each immunoglobulin has two antigen binding sites with remarkable affinity for a particular antigen. The variable domains are assembled by a process called V-(D)-J rearrangement and can then be subjected to somatic hypermutations which, after exposure to antigen and selection, allow affinity maturation for a particular antigen. The sequence is that of Immunoglobulin kappa variable 2-29 from Homo sapiens (Human).